The primary structure comprises 1092 residues: Extended synaptotagmin-1 (1092 aa).

An N-acetylmethionine modification is found at M1. The Cytoplasmic segment spans residues 1-28 (MEHSPEEGASPEPSGQPPATDSTRDGGS). The segment at 1 to 36 (MEHSPEEGASPEPSGQPPATDSTRDGGSGVPPAGPG) is disordered. The chain crosses the membrane as a helical span at residues 29 to 49 (GVPPAGPGAASEALAVLTSFG). The Lumenal segment spans residues 50-52 (RRL). The chain crosses the membrane as a helical span at residues 53 to 73 (LVLVPVYLAGAAGLSVGFVLF). The Cytoplasmic segment spans residues 74 to 1092 (GLALYLGWRR…LMDDRDKGGS (1019 aa)). Residues 125 to 303 (DVEKAEWLNK…LPNRLLVPLV (179 aa)) enclose the SMP-LTD domain. 4 consecutive C2 domains span residues 302 to 423 (LVPD…DNWY), 444 to 570 (DAEK…QLSS), 616 to 738 (DAPP…DEWL), and 769 to 886 (QVNS…ALSG). A Phosphoserine; by CDK5 modification is found at S314. Ca(2+) contacts are provided by K334, D335, D347, D394, D396, D398, D400, and D401. A disordered region spans residues 604–628 (WDRESLETGSSVDAPPRPYHTTPNS). Position 804 is an N6-acetyllysine (K804). Position 807 is a phosphoserine (S807). The disordered stretch occupies residues 909–937 (HSHSYSHSHSSSSLNDEPEALGGPTHPAS). Low complexity predominate over residues 911–921 (HSYSHSHSSSS). Phosphoserine occurs at positions 937 and 951. One can recognise a C2 5 domain in the interval 959–1081 (PLGQVKLTVW…DLSQGAAQWY (123 aa)). Y997 carries the phosphotyrosine modification. Residues 1006-1013 (KNRSTKRK) form a required for phosphatidylinositol 4,5-bisphosphate-dependent location at the cell membrane region.

It belongs to the extended synaptotagmin family. As to quaternary structure, interacts with ESYT2 and ESYT3. Interacts with ADGRD1; inhibiting the G-protein-coupled receptor activity of ADGRD1. Interaction with ADGRD1 is abolished when cytosolic calcium increases, relieving ADGRD1 G-protein-coupled receptor activity. Interacts (phosphorylated form) with SLC2A4. Post-translationally, phosphorylated on Ser residues in insulin-treated adipocytes (in vitro); this promotes interaction with SLC2A4.

It localises to the endoplasmic reticulum membrane. It is found in the cell membrane. Its function is as follows. Binds calcium (via the C2 domains) and translocates to sites of contact between the endoplasmic reticulum and the cell membrane in response to increased cytosolic calcium levels. Helps tether the endoplasmic reticulum to the cell membrane and promotes the formation of appositions between the endoplasmic reticulum and the cell membrane. Acts as an inhibitor of ADGRD1 G-protein-coupled receptor activity in absence of cytosolic calcium. Binds glycerophospholipids in a barrel-like domain and may play a role in cellular lipid transport. In Mus musculus (Mouse), this protein is Extended synaptotagmin-1 (Esyt1).